Reading from the N-terminus, the 872-residue chain is HTH-type transcriptional regulator AlkS (872 aa).

One can recognise an HTH luxR-type domain in the interval 805–870 (LTNTQSTITI…RAVSEARLRG (66 aa)). Positions 829 to 848 (NKEIAERLLITEDTVKWHLK) form a DNA-binding region, H-T-H motif.

It functions in the pathway hydrocarbon metabolism; alkane degradation. This protein activates the expression of AlkB1 in the presence of alkanes. In Alcanivorax borkumensis (strain ATCC 700651 / DSM 11573 / NCIMB 13689 / SK2), this protein is HTH-type transcriptional regulator AlkS (alkS).